Consider the following 125-residue polypeptide: UPF0231 protein HD_1708 (125 aa).

It belongs to the UPF0231 family.

The protein is UPF0231 protein HD_1708 of Haemophilus ducreyi (strain 35000HP / ATCC 700724).